Reading from the N-terminus, the 394-residue chain is Succinate--CoA ligase [ADP-forming] subunit beta (394 aa).

Residues K46, 53–55 (GRG), E99, C102, and E107 each bind ATP. Residues N199 and D213 each coordinate Mg(2+). Residues N264 and 321 to 323 (GIV) contribute to the substrate site.

It belongs to the succinate/malate CoA ligase beta subunit family. In terms of assembly, heterotetramer of two alpha and two beta subunits. Mg(2+) is required as a cofactor.

The catalysed reaction is succinate + ATP + CoA = succinyl-CoA + ADP + phosphate. It carries out the reaction GTP + succinate + CoA = succinyl-CoA + GDP + phosphate. The protein operates within carbohydrate metabolism; tricarboxylic acid cycle; succinate from succinyl-CoA (ligase route): step 1/1. Succinyl-CoA synthetase functions in the citric acid cycle (TCA), coupling the hydrolysis of succinyl-CoA to the synthesis of either ATP or GTP and thus represents the only step of substrate-level phosphorylation in the TCA. The beta subunit provides nucleotide specificity of the enzyme and binds the substrate succinate, while the binding sites for coenzyme A and phosphate are found in the alpha subunit. The polypeptide is Succinate--CoA ligase [ADP-forming] subunit beta (Haemophilus influenzae (strain PittGG)).